The following is a 537-amino-acid chain: Interleukin-2 receptor subunit beta (537 aa).

Positions 1 to 26 are cleaved as a signal peptide; the sequence is MATVDLSWRLPLYILLLLLATTWVSA. The Extracellular segment spans residues 27–239; the sequence is AVNDCSHLKC…FRTRPADPKE (213 aa). The cysteines at positions 36 and 46 are disulfide-linked. N-linked (GlcNAc...) asparagine glycosylation is found at asparagine 43, asparagine 55, and asparagine 71. Cysteine 74 and cysteine 86 are disulfide-bonded. Positions 135 to 235 constitute a Fibronectin type-III domain; the sequence is APHSLQVLHI…QPMAFRTRPA (101 aa). Residue asparagine 150 is glycosylated (N-linked (GlcNAc...) asparagine). The short motif at 221–225 is the WSXWS motif element; that stretch reads WSPWS. Residues 240-267 form a helical membrane-spanning segment; it reads IFPLPWLRCLLLVLGCFFGFLSCVCVLV. At 268–537 the chain is on the cytoplasmic side; it reads KCRYLGPWLK…LQAQDSAHLI (270 aa). The Box 1 motif signature appears at 280-288; that stretch reads LKCHIPDPS. Disordered regions lie at residues 442–466 and 479–498; these read AYGN…SLAS and ELGD…QASV. The segment covering 487-497 has biased composition (polar residues); the sequence is MSTNSSGQQAS.

It belongs to the type I cytokine receptor family. Type 4 subfamily. In terms of assembly, non-covalent dimer of an alpha and a beta subunit. IL2R exists in 3 different forms: a high affinity dimer, an intermediate affinity monomer (beta subunit), and a low affinity monomer (alpha subunit). The high and intermediate affinity forms also associate with a gamma subunit. Interacts with SHB upon interleukin stimulation.

The protein resides in the cell membrane. It localises to the cell surface. Functionally, receptor for interleukin-2. This beta subunit is involved in receptor mediated endocytosis and transduces the mitogenic signals of IL2. Probably in association with IL15RA, involved in the stimulation of neutrophil phagocytosis by IL15. This Rattus norvegicus (Rat) protein is Interleukin-2 receptor subunit beta (Il2rb).